The following is a 293-amino-acid chain: Homoserine kinase (293 aa).

Pro-84–Ala-94 is an ATP binding site.

This sequence belongs to the GHMP kinase family. Homoserine kinase subfamily.

It is found in the cytoplasm. It catalyses the reaction L-homoserine + ATP = O-phospho-L-homoserine + ADP + H(+). The protein operates within amino-acid biosynthesis; L-threonine biosynthesis; L-threonine from L-aspartate: step 4/5. Its function is as follows. Catalyzes the ATP-dependent phosphorylation of L-homoserine to L-homoserine phosphate. The protein is Homoserine kinase of Nautilia profundicola (strain ATCC BAA-1463 / DSM 18972 / AmH).